A 256-amino-acid polypeptide reads, in one-letter code: Glutamate racemase (256 aa).

Substrate-binding positions include 11 to 12 and 43 to 44; these read DS and YG. The active-site Proton donor/acceptor is cysteine 74. 75–76 provides a ligand contact to substrate; that stretch reads NT. Cysteine 182 serves as the catalytic Proton donor/acceptor. 183-184 is a substrate binding site; it reads TH.

It belongs to the aspartate/glutamate racemases family.

The enzyme catalyses L-glutamate = D-glutamate. Its pathway is cell wall biogenesis; peptidoglycan biosynthesis. Its function is as follows. Provides the (R)-glutamate required for cell wall biosynthesis. This Leptospira interrogans serogroup Icterohaemorrhagiae serovar Lai (strain 56601) protein is Glutamate racemase.